Reading from the N-terminus, the 212-residue chain is Protein-L-isoaspartate O-methyltransferase (212 aa).

S60 is a catalytic residue.

The protein belongs to the methyltransferase superfamily. L-isoaspartyl/D-aspartyl protein methyltransferase family.

It is found in the cytoplasm. It carries out the reaction [protein]-L-isoaspartate + S-adenosyl-L-methionine = [protein]-L-isoaspartate alpha-methyl ester + S-adenosyl-L-homocysteine. Catalyzes the methyl esterification of L-isoaspartyl residues in peptides and proteins that result from spontaneous decomposition of normal L-aspartyl and L-asparaginyl residues. It plays a role in the repair and/or degradation of damaged proteins. This is Protein-L-isoaspartate O-methyltransferase from Methanococcus maripaludis (strain C5 / ATCC BAA-1333).